Reading from the N-terminus, the 108-residue chain is MLLFCPGCGNGLIVEEGQRCHRFACNTCPYVHNITRKVTNRKYPKLKEVDDVLGGAAAWENVDSTAEPCPKCEHPRAYFMQLQTRSADEPMTTFYKCCNAQCGHRWRD.

Zn(2+)-binding residues include cysteine 5, cysteine 8, cysteine 25, cysteine 28, cysteine 69, and cysteine 72. The C4-type zinc-finger motif lies at 5–28; sequence CPGCGNGLIVEEGQRCHRFACNTC. A TFIIS-type zinc finger spans residues 65–107; it reads TAEPCPKCEHPRAYFMQLQTRSADEPMTTFYKCCNAQCGHRWR. The Hairpin motif lies at 88-89; the sequence is DE. Cysteine 98 and cysteine 102 together coordinate Zn(2+).

The protein belongs to the archaeal RpoM/eukaryotic RPA12/RPB9/RPC11 RNA polymerase family. Component of the RNA polymerase III complex consisting of 17 subunits: a ten-subunit horseshoe-shaped catalytic core composed of POLR3A/RPC1, POLR3B/RPC2, POLR1C/RPAC1, POLR1D/RPAC2, POLR3K/RPC10, POLR2E/RPABC1, POLR2F/RPABC2, POLR2H/RPABC3, POLR2K/RPABC4 and POLR2L/RPABC5; a mobile stalk composed of two subunits POLR3H/RPC8 and CRCP/RPC9, protruding from the core and functioning primarily in transcription initiation; and additional subunits homologous to general transcription factors of the RNA polymerase II machinery, POLR3C/RPC3-POLR3F/RPC6-POLR3G/RPC7 heterotrimer required for transcription initiation and POLR3D/RPC4-POLR3E/RPC5 heterodimer involved in both transcription initiation and termination.

The protein resides in the nucleus. Functionally, core component of RNA polymerase III (Pol III) which synthesizes small non-coding RNAs using the four ribonucleoside triphosphates as substrates. Can mediate Pol I proofreading of the nascent RNA transcript. Anchors into the Pol III active site to constantly monitor transcription fidelity, cleaves mis-incorporated 5'-ribonucleotides and restarts the transcription process. Once Pol III reaches the poly(dT) termination signal, can induce Pol III clamp opening and transcription termination. Pol III plays an important role in sensing and limiting infection by intracellular bacteria and DNA viruses. Acts as a nuclear and cytosolic DNA sensor involved in innate immune response. Can sense non-self dsDNA that serves as template for transcription into dsRNA. The non-self RNA polymerase III transcripts, such as Epstein-Barr virus-encoded RNAs (EBERs) induce type I interferon and NF-kappa-B through the RIG-I pathway. The sequence is that of DNA-directed RNA polymerase III subunit RPC10 from Mus musculus (Mouse).